Consider the following 436-residue polypeptide: Transcription termination factor Rho (436 aa).

A Rho RNA-BD domain is found at 65 to 140 (LVFVKGVLEI…IRMESVNGLP (76 aa)). Residues 185–190 (GKGQRG), 197–202 (KAGKTV), and R228 each bind ATP.

Belongs to the Rho family. In terms of assembly, homohexamer. The homohexamer assembles into an open ring structure.

Its function is as follows. Facilitates transcription termination by a mechanism that involves Rho binding to the nascent RNA, activation of Rho's RNA-dependent ATPase activity, and release of the mRNA from the DNA template. The protein is Transcription termination factor Rho of Aquifex aeolicus (strain VF5).